Reading from the N-terminus, the 309-residue chain is Foldase protein PrsA (309 aa).

The N-terminal stretch at 1-22 is a signal peptide; that stretch reads MKTRSKLAAGFLTLMSVATLAA. Residue C23 is the site of N-palmitoyl cysteine attachment. C23 carries S-diacylglycerol cysteine lipidation. One can recognise a PpiC domain in the interval 146 to 241; that stretch reads TPETSVQVIK…TSYYIIKVTD (96 aa).

This sequence belongs to the PrsA family.

The protein localises to the cell membrane. It catalyses the reaction [protein]-peptidylproline (omega=180) = [protein]-peptidylproline (omega=0). In terms of biological role, plays a major role in protein secretion by helping the post-translocational extracellular folding of several secreted proteins. The chain is Foldase protein PrsA from Streptococcus agalactiae serotype Ia (strain ATCC 27591 / A909 / CDC SS700).